Here is a 319-residue protein sequence, read N- to C-terminus: sn-1-specific diacylglycerol lipase ABHD11 (319 aa).

Residues 1–28 constitute a mitochondrion transit peptide; it reads MTLKLAVLRQIFQGSKGWHLWQHWRAFY. Positions 69 to 304 constitute an AB hydrolase-1 domain; the sequence is PPLVLLHGLF…GAGHWVHADK (236 aa). Active-site charge relay system residues include S143, E239, and H298.

The protein belongs to the AB hydrolase superfamily. Post-translationally, phosphorylated.

It is found in the mitochondrion. The protein localises to the mitochondrion matrix. It catalyses the reaction 1-octadecanoyl-2-(5Z,8Z,11Z,14Z-eicosatetraenoyl)-sn-glycerol + H2O = 2-(5Z,8Z,11Z,14Z-eicosatetraenoyl)-glycerol + octadecanoate + H(+). The catalysed reaction is a 1,2-diacyl-sn-glycerol + H2O = a 2-acylglycerol + a fatty acid + H(+). The enzyme catalyses a 1,3-diacyl-sn-glycerol + H2O = a 1-acyl-sn-glycerol + a fatty acid + H(+). It carries out the reaction 1-octadecanoyl-2-(9Z-octadecenoyl)-sn-glycerol + H2O = 2-(9Z-octadecenoyl)-glycerol + octadecanoate + H(+). It catalyses the reaction 1-octadecanoyl-2-(4Z,7Z,10Z,13Z,16Z,19Z-docosahexaenoyl)-sn-glycerol + H2O = 2-(4Z,7Z,10Z,13Z,16Z,19Z-docosahexaenoyl)-glycerol + octadecanoate + H(+). The catalysed reaction is 1,2-didecanoylglycerol + H2O = decanoylglycerol + decanoate + H(+). Its function is as follows. Catalyzes the hydrolysis of diacylglycerol in vitro and may function as a key regulator in lipid metabolism, namely by regulating the intracellular levels of diacylglycerol. 1,2-diacyl-sn-glycerols are the preferred substrate over 1,3-diacyl-sn-glycerols. The enzyme hydrolyzes stearate in preference to palmitate from the sn-1 position of 1,2-diacyl-sn-glycerols. The chain is sn-1-specific diacylglycerol lipase ABHD11 from Xenopus tropicalis (Western clawed frog).